The chain runs to 367 residues: Chorismate synthase (367 aa).

Arg-48 contributes to the NADP(+) binding site. Residues 125–127 (RSS), 243–244 (NA), Gly-283, 298–302 (KPTSS), and Arg-324 contribute to the FMN site.

This sequence belongs to the chorismate synthase family. As to quaternary structure, homotetramer. Requires FMNH2 as cofactor.

The catalysed reaction is 5-O-(1-carboxyvinyl)-3-phosphoshikimate = chorismate + phosphate. It functions in the pathway metabolic intermediate biosynthesis; chorismate biosynthesis; chorismate from D-erythrose 4-phosphate and phosphoenolpyruvate: step 7/7. Functionally, catalyzes the anti-1,4-elimination of the C-3 phosphate and the C-6 proR hydrogen from 5-enolpyruvylshikimate-3-phosphate (EPSP) to yield chorismate, which is the branch point compound that serves as the starting substrate for the three terminal pathways of aromatic amino acid biosynthesis. This reaction introduces a second double bond into the aromatic ring system. The chain is Chorismate synthase from Psychrobacter arcticus (strain DSM 17307 / VKM B-2377 / 273-4).